A 158-amino-acid polypeptide reads, in one-letter code: Transcription elongation factor GreA (158 aa).

Residues 14 to 76 (LDQLKDELTH…EIESILKNVK (63 aa)) adopt a coiled-coil conformation.

It belongs to the GreA/GreB family.

In terms of biological role, necessary for efficient RNA polymerase transcription elongation past template-encoded arresting sites. The arresting sites in DNA have the property of trapping a certain fraction of elongating RNA polymerases that pass through, resulting in locked ternary complexes. Cleavage of the nascent transcript by cleavage factors such as GreA or GreB allows the resumption of elongation from the new 3'terminus. GreA releases sequences of 2 to 3 nucleotides. This Acholeplasma laidlawii (strain PG-8A) protein is Transcription elongation factor GreA.